We begin with the raw amino-acid sequence, 412 residues long: Isocitrate dehydrogenase [NADP] cytoplasmic (412 aa).

NADP(+) is bound by residues 76 to 78 (TIT) and Arg-83. Position 78 (Thr-78) interacts with substrate. Substrate is bound by residues 95–101 (SPNGTIR), Arg-110, and Arg-133. Asp-253 is a binding site for Mn(2+). Lys-261 lines the NADP(+) pocket. Residue Asp-276 coordinates Mn(2+). NADP(+) is bound by residues 309–314 (GTVTRH) and Asn-327.

The protein belongs to the isocitrate and isopropylmalate dehydrogenases family. As to quaternary structure, homodimer. Requires Mg(2+) as cofactor. Mn(2+) is required as a cofactor.

The protein resides in the cytoplasm. The catalysed reaction is D-threo-isocitrate + NADP(+) = 2-oxoglutarate + CO2 + NADPH. The chain is Isocitrate dehydrogenase [NADP] cytoplasmic (idhC) from Dictyostelium discoideum (Social amoeba).